A 142-amino-acid chain; its full sequence is COA8 family protein CBG23705, mitochondrial (142 aa).

This sequence belongs to the COA8 family.

Its subcellular location is the mitochondrion inner membrane. In terms of biological role, may be required for cytochrome c complex (COX) assembly and function, COX being the terminal component of the mitochondrial respiratory chain. This Caenorhabditis briggsae protein is COA8 family protein CBG23705, mitochondrial.